The following is a 528-amino-acid chain: GMP synthase [glutamine-hydrolyzing] (528 aa).

The Glutamine amidotransferase type-1 domain maps to K3 to D199. Residue C83 is the Nucleophile of the active site. Residues H174 and E176 contribute to the active site. The GMPS ATP-PPase domain occupies W200–R394. Residue S227 to S233 participates in ATP binding.

As to quaternary structure, homodimer.

The enzyme catalyses XMP + L-glutamine + ATP + H2O = GMP + L-glutamate + AMP + diphosphate + 2 H(+). It participates in purine metabolism; GMP biosynthesis; GMP from XMP (L-Gln route): step 1/1. Functionally, catalyzes the synthesis of GMP from XMP. The chain is GMP synthase [glutamine-hydrolyzing] from Ehrlichia ruminantium (strain Welgevonden).